A 696-amino-acid polypeptide reads, in one-letter code: Divalent metal transporter 1 (696 aa).

The segment at 1 to 31 (MHQDNSMRRAINQSRNGGSDSCDINNDREHD) is disordered. The Cytoplasmic segment spans residues 1–236 (MHQDNSMRRA…RSNRLSFMSK (236 aa)). The span at 11 to 24 (INQSRNGGSDSCDI) shows a compositional bias: polar residues. A helical transmembrane segment spans residues 237–255 (LKMYFNYFGPGWIVAIAYL). Over 256-288 (DPGNICGNLNVGLIRSDDFINVNSSVKDYTGYR) the chain is Vacuolar. An N-linked (GlcNAc...) asparagine glycan is attached at Asn278. A helical transmembrane segment spans residues 289-311 (LLWVLVYGHILGFIFHTLSMKLG). Topologically, residues 312-331 (HITGLDLAALCRKEFSSKFS) are cytoplasmic. The helical transmembrane segment at 332-357 (YFLYICVQIAIWGAHLQAIIGVFVAI) threads the bilayer. The Vacuolar segment spans residues 358–362 (NLILG). Residues 363-382 (IPVKIAILYTLIEAFAYSFL) form a helical membrane-spanning segment. At 383-393 (ENKSLDLLEKV) the chain is on the cytoplasmic side. The chain crosses the membrane as a helical span at residues 394–416 (LSLLIGILVCCFMFNVFMTPINF). Topologically, residues 417 to 435 (QEVASSILYPRIPKGKLLD) are vacuolar. A helical transmembrane segment spans residues 436–455 (TMGLLGSVISAHIFYLHSNL). The Cytoplasmic portion of the chain corresponds to 456 to 475 (TSKKKPVIYNDRMVKRYNKL). A helical membrane pass occupies residues 476–499 (GTIESGGSLLVSCITNCIIVLTFA). The Vacuolar segment spans residues 500-529 (EVNISGDDRKADYNLFNAYDVMKKYFGKTS). An N-linked (GlcNAc...) asparagine glycan is attached at Asn502. Residues 530-546 (MYIWSFGLLSSGNNASF) form a helical membrane-spanning segment. Over 547-566 (MCEYASKSVFEGFLNKNVNP) the chain is Cytoplasmic. Residues 567–585 (FFRVIFSRIILFIMLYAYV) form a helical membrane-spanning segment. The Vacuolar segment spans residues 586–596 (SYDKYTIDQLS). Residues 597-615 (NFINVVQILLLPLAIIPLY) traverse the membrane as a helical segment. Residues 616–634 (RFSIHKNVLGKFAIKGAFK) are Cytoplasmic-facing. The chain crosses the membrane as a helical span at residues 635–657 (YLVFVLVISIIVANFLLTLFDFL). Residues 658–662 (QYAPS) lie on the Vacuolar side of the membrane. A helical transmembrane segment spans residues 663–684 (NLYVIFIFISSIFYLLFIIYFF). Over 685–696 (NMPITKTYYKDS) the chain is Cytoplasmic.

The protein belongs to the NRAMP (TC 2.A.55) family.

The protein resides in the vacuole membrane. The enzyme catalyses Fe(2+)(in) = Fe(2+)(out). Functionally, iron transporter. Required for parasite development during the blood stages. Required for full pathogenicity. This chain is Divalent metal transporter 1, found in Plasmodium yoelii.